The sequence spans 851 residues: Phosphatidate phosphatase LPIN3 (851 aa).

Positions 1 to 108 are N-LIP; sequence MNYVGQLAET…VPPGLCTSPI (108 aa). Disordered regions lie at residues 114 to 385 and 400 to 432; these read SGFP…YLDD and QSDS…EPTL. Positions 140-151 are enriched in basic residues; sequence GRRKRRRRRKPK. Positions 141-148 match the Nuclear localization signal motif; sequence RRKRRRRR. Threonine 159 bears the Phosphothreonine mark. Phosphoserine is present on residues serine 161, serine 162, and serine 224. Low complexity predominate over residues 268 to 286; it reads GRAGATSPPRGGPSTPSTS. A compositionally biased stretch (basic and acidic residues) spans 418-429; sequence SLRDPNPEHEPE. The residue at position 463 (serine 463) is a Phosphoserine. Over residues 542 to 559 the composition is skewed to basic and acidic residues; that stretch reads SAQKEKTAAKEQQGEKTE. The segment at 542 to 591 is disordered; sequence SAQKEKTAAKEQQGEKTEVLSSDDDAPDSPVILEIPSLPPSTPPSTPTYK. A compositionally biased stretch (pro residues) spans 578–587; that stretch reads SLPPSTPPST. The tract at residues 590-792 is C-LIP; the sequence is YKKSLRLSSD…RIFTVNPRGE (203 aa). Positions 644–648 match the DXDXT motif motif; sequence DIDGT. Positions 655-659 match the LXXIL motif motif; the sequence is LGHIL.

It belongs to the lipin family. Mg(2+) serves as cofactor. Significant expression in intestine and other regions of the gastrointestinal tract.

It is found in the nucleus. It catalyses the reaction a 1,2-diacyl-sn-glycero-3-phosphate + H2O = a 1,2-diacyl-sn-glycerol + phosphate. Its activity is regulated as follows. Inhibited by N-ethylmaleimide. In terms of biological role, magnesium-dependent phosphatidate phosphatase enzyme which catalyzes the conversion of phosphatidic acid to diacylglycerol during triglyceride, phosphatidylcholine and phosphatidylethanolamine biosynthesis therefore regulates fatty acid metabolism. The protein is Phosphatidate phosphatase LPIN3 of Homo sapiens (Human).